The primary structure comprises 303 residues: DCN1-like protein 3 (303 aa).

Disordered stretches follow at residues Met1–Ile41 and Glu62–Glu83. The N-myristoyl glycine moiety is linked to residue Gly2. The DCUN1 domain occupies Ser85 to Met277. The interval Glu284–Thr303 is disordered. Residues Thr294–Thr303 show a composition bias toward polar residues.

May interact (via the DCUN1 domain) with unneddylated cullins.

The protein localises to the cell membrane. The protein resides in the cytoplasm. It localises to the nucleus. It is found in the perinuclear region. Contributes to the neddylation of all cullins by transferring NEDD8 from N-terminally acetylated NEDD8-conjugating E2s enzyme to different cullin C-terminal domain-RBX complexes. At the cell membrane, can promote and as well inhibit cullins neddylation. This Xenopus tropicalis (Western clawed frog) protein is DCN1-like protein 3.